Consider the following 141-residue polypeptide: Light-regulated protein 1, chloroplastic (141 aa).

Residues 1–41 (MQGALFIKPTILLPLPSSVSSPKLTFLLPHATKASRLSSLR) constitute a chloroplast transit peptide. Low complexity predominate over residues 35–51 (SRLSSLRSNNSSSSSSL). Positions 35–58 (SRLSSLRSNNSSSSSSLTSDPNTV) are disordered. The segment at 58 to 132 (VDYNSSILSV…ACDDLGGEFC (75 aa)) is 2 X 15 AA approximate repeats. Tandem repeats lie at residues 67-81 (VFPA…GYAC) and 118-132 (VFRE…GEFC).

As to quaternary structure, component of high molecular weight thylakoid LFNRs-containing protein complexes containing LIR1, LFNR1, LFNR2, TIC62 and TROL proteins. Interacts directly with LFNR1 and LFNR2; LIR1 increases the affinity of LFNR1 and LFNR2 for TIC62 and subsequent thylakoid relocalization. Post-translationally, may form interchain disulfide bonds with LFNR1 and LFNR2.

It is found in the plastid. The protein localises to the chloroplast thylakoid membrane. It localises to the chloroplast envelope. The protein resides in the chloroplast stroma. Functionally, thylakoid-determinant subunit of high molecular weight LFNRs-containing protein complexes. This Arabidopsis thaliana (Mouse-ear cress) protein is Light-regulated protein 1, chloroplastic.